A 130-amino-acid polypeptide reads, in one-letter code: Small ribosomal subunit protein uS8 (130 aa).

Belongs to the universal ribosomal protein uS8 family. As to quaternary structure, part of the 30S ribosomal subunit. Contacts proteins S5 and S12.

Its function is as follows. One of the primary rRNA binding proteins, it binds directly to 16S rRNA central domain where it helps coordinate assembly of the platform of the 30S subunit. This chain is Small ribosomal subunit protein uS8, found in Shewanella pealeana (strain ATCC 700345 / ANG-SQ1).